A 272-amino-acid chain; its full sequence is DNA repair protein RecO (272 aa).

This sequence belongs to the RecO family.

Its function is as follows. Involved in DNA repair and RecF pathway recombination. The sequence is that of DNA repair protein RecO from Limosilactobacillus fermentum (strain NBRC 3956 / LMG 18251) (Lactobacillus fermentum).